The chain runs to 601 residues: FAD-binding monooxygenase stcW (601 aa).

FAD contacts are provided by residues 42-43 (FS), glutamate 64, tryptophan 73, aspartate 84, tyrosine 90, and valine 133.

It belongs to the FAD-binding monooxygenase family. It depends on FAD as a cofactor.

It functions in the pathway mycotoxin biosynthesis; sterigmatocystin biosynthesis. In terms of biological role, FAD-binding monooxygenase; part of the gene cluster that mediates the biosynthesis of sterigmatocystin (ST), a polyketide-derived furanocoumarin which is part of the most toxic and carcinogenic compounds among the known mycotoxins. The first step in the biosynthesis of sterigmatocystin is the production of hexanoate by the fatty acid synthase (FAS) units stcJ and stcK. The polyketide backbone is assembled by the non-reducing polyketide synthase stcA by condensation of the starter hexanoyl-CoA and 7 malonyl-CoA extender units followed by cyclization and release of norsolorinic acid. Norsolorinic acid is the first stable intermediate in the biosynthesis of sterigmatocystin and is converted into averantin (AVN) by the ketoreductase stcE which reduces the hexanoate ketone to an alcohol. Averantin is then oxidized into 5'-hydroxyaverantin (HAVN) by the cytochrome P450 monooxygenase stcF. 5'-hydroxyaverantin is further converted to 5'-oxyaverantin (OAVN) by the 5'-hydroxyaverantin dehydrogenase stcG. The next step is the conversion of OAVN into averufin (AVF) which is catalyzed by a yet to be identified enzyme. The cytochrome P450 monooxygenase stcB and the flavin-binding monooxygenase stcW are both required for the conversion of averufin to 1-hydroxyversicolorone. The esterase stcI probably catalyzes the formation of versiconal hemiacetal acetate from 1-hydroxyversicolorone. The oxydoreductase stcN then probably catalyzes the biosynthetic step from versiconal to versicolorin B (VERB). The next step is performed by the versicolorin B desaturase stcL to produce versicolorin A (VERA). The ketoreductase stcU and the cytochrome P450 monooxygenase stcS are involved in the conversion of versicolorin A to demethylsterigmatocystin. The Baeyer-Villiger oxidas stcQ and the reductase stcR might be involved in the biosynthetic step from versicolorin A to demethylsterigmatocystin. The final step in the biosynthesis of sterigmatocystin is the methylation of demethylsterigmatocystin catalyzed by the methyltransferase stcP. The sequence is that of FAD-binding monooxygenase stcW from Emericella nidulans (strain FGSC A4 / ATCC 38163 / CBS 112.46 / NRRL 194 / M139) (Aspergillus nidulans).